The chain runs to 313 residues: uncharacterized protein (313 aa).

2 disordered regions span residues 24-53 (EEGE…PTPN) and 190-291 (TALS…PCAR). A compositionally biased stretch (polar residues) spans 211 to 229 (TQNYVLKLQLSSPNSQPMS). Residues 239 to 260 (SCSSSNCSSSSSSSACSSVSIS) are compositionally biased toward low complexity. Over residues 261–284 (DPNNITAYETNNVNPQFPSNQPLD) the composition is skewed to polar residues.

This is an uncharacterized protein from Saccharomyces cerevisiae (strain ATCC 204508 / S288c) (Baker's yeast).